A 207-amino-acid chain; its full sequence is Dephospho-CoA kinase (207 aa).

The DPCK domain occupies 12 to 207 (LIGITGMIGG…LYSTLLGKML (196 aa)). Residue 20-25 (GGGKST) coordinates ATP.

It belongs to the CoaE family.

Its subcellular location is the cytoplasm. It catalyses the reaction 3'-dephospho-CoA + ATP = ADP + CoA + H(+). Its pathway is cofactor biosynthesis; coenzyme A biosynthesis; CoA from (R)-pantothenate: step 5/5. Its function is as follows. Catalyzes the phosphorylation of the 3'-hydroxyl group of dephosphocoenzyme A to form coenzyme A. In Leptospira interrogans serogroup Icterohaemorrhagiae serovar Lai (strain 56601), this protein is Dephospho-CoA kinase.